A 192-amino-acid chain; its full sequence is MNTIWIAVAAISLLGLAFGAILGYASRRFAVEDDPVVEKIDEILPQSQCGQCGYPGCRPYAEAISCNGEKINRCAPGGEAVMLKISELLNVEPQPIDGEEQELAPARVVAVIDENNCIGCTKCIQACPVDAIVGATRAMHTVMSDLCTGCNLCVDPCPTQCISLQPVAETPDSWKWDLNTIPVRIIPVEHHA.

Residues 1 to 26 (MNTIWIAVAAISLLGLAFGAILGYAS) are hydrophobic. Residues 32-91 (EDDPVVEKIDEILPQSQCGQCGYPGCRPYAEAISCNGEKINRCAPGGEAVMLKISELLNV) enclose the 4Fe-4S domain. Residues Cys49, Cys52, Cys57, Cys74, Cys117, Cys120, Cys123, Cys127, Cys147, Cys150, Cys153, and Cys157 each coordinate [4Fe-4S] cluster. 4Fe-4S ferredoxin-type domains follow at residues 108–137 (VVAV…GATR) and 138–167 (AMHT…LQPV).

This sequence belongs to the 4Fe4S bacterial-type ferredoxin family. RnfB subfamily. As to quaternary structure, the complex is composed of six subunits: RsxA, RsxB, RsxC, RsxD, RsxE and RsxG. Requires [4Fe-4S] cluster as cofactor.

The protein resides in the cell inner membrane. Its function is as follows. Part of a membrane-bound complex that couples electron transfer with translocation of ions across the membrane. Required to maintain the reduced state of SoxR. This Escherichia fergusonii (strain ATCC 35469 / DSM 13698 / CCUG 18766 / IAM 14443 / JCM 21226 / LMG 7866 / NBRC 102419 / NCTC 12128 / CDC 0568-73) protein is Ion-translocating oxidoreductase complex subunit B.